Reading from the N-terminus, the 837-residue chain is Cap-specific mRNA (nucleoside-2'-O-)-methyltransferase 1 (837 aa).

The tract at residues 1–66 is disordered; sequence MKRRTDPECT…EGKQPCSDDF (66 aa). The Bipartite nuclear localization signal signature appears at 2 to 18; the sequence is KRRTDPECTAPLKKQKR. Phosphoserine is present on residues S27, S30, and S52. Over residues 56–66 the composition is skewed to basic and acidic residues; it reads TEGKQPCSDDF. The 47-residue stretch at 86–132 folds into the G-patch domain; sequence YNSVSQRLMAKMGFREGEGLGKYSQGRKDIVETSNQKGRRGLGLTLQ. S90 is modified (phosphoserine). At K107 the chain carries N6-acetyllysine. Substrate is bound by residues 202–206 and R217; that span reads KSVFD. A RrmJ-type SAM-dependent 2'-O-MTase domain is found at 230-449; sequence FFLNRAAMKM…ERYVVCKGLK (220 aa). S-adenosyl-L-methionine is bound at residue N233. K238 is a catalytic residue. S-adenosyl-L-methionine is bound by residues 276–282 and 334–335; these read CAGPGGF and DI. D363 is an active-site residue. 373–375 contacts substrate; that stretch reads NLQ. The Proton acceptor role is filled by K403. A substrate-binding site is contributed by N438. An interaction with POLR2A region spans residues 726–834; sequence SGGTPKLSYT…VLSFIQSHNP (109 aa). Positions 751 to 785 constitute a WW domain; sequence RTVNEPWTMGFSKSNNRKFFYNKKTQKSVYALPTE.

Interacts with POLR2A (via C-terminus).

The protein resides in the nucleus. It catalyses the reaction a 5'-end (N(7)-methyl 5'-triphosphoguanosine)-ribonucleoside in mRNA + S-adenosyl-L-methionine = a 5'-end (N(7)-methyl 5'-triphosphoguanosine)-(2'-O-methyl-ribonucleoside) in mRNA + S-adenosyl-L-homocysteine + H(+). In terms of biological role, S-adenosyl-L-methionine-dependent methyltransferase that mediates mRNA cap1 2'-O-ribose methylation to the 5'-cap structure of mRNAs. Methylates the ribose of the first nucleotide of a m(7)GpppG-capped mRNA and small nuclear RNA (snRNA) to produce m(7)GpppRm (cap1). Displays a preference for cap0 transcripts. Cap1 modification is linked to higher levels of translation. May be involved in the interferon response pathway. This Mus musculus (Mouse) protein is Cap-specific mRNA (nucleoside-2'-O-)-methyltransferase 1 (Cmtr1).